Reading from the N-terminus, the 199-residue chain is Chaperone protein TorD (199 aa).

The protein belongs to the TorD/DmsD family. TorD subfamily.

It localises to the cytoplasm. Its function is as follows. Involved in the biogenesis of TorA. Acts on TorA before the insertion of the molybdenum cofactor and, as a result, probably favors a conformation of the apoenzyme that is competent for acquiring the cofactor. This is Chaperone protein TorD from Escherichia coli (strain ATCC 8739 / DSM 1576 / NBRC 3972 / NCIMB 8545 / WDCM 00012 / Crooks).